Consider the following 197-residue polypeptide: Probable chemoreceptor glutamine deamidase CheD 2 (197 aa).

It belongs to the CheD family.

It carries out the reaction L-glutaminyl-[protein] + H2O = L-glutamyl-[protein] + NH4(+). Functionally, probably deamidates glutamine residues to glutamate on methyl-accepting chemotaxis receptors (MCPs), playing an important role in chemotaxis. The chain is Probable chemoreceptor glutamine deamidase CheD 2 from Dechloromonas aromatica (strain RCB).